The following is a 232-amino-acid chain: Peptidyl-prolyl cis-trans isomerase CYP26-1 (232 aa).

The PPIase cyclophilin-type domain maps to 7-166 (FFDLTVDGKP…KPVVIADCGE (160 aa)). An N-linked (GlcNAc...) asparagine glycan is attached at Asn-108. The helical transmembrane segment at 212 to 232 (YYLINIVVACMVLMCFWSWFV) threads the bilayer.

Belongs to the cyclophilin-type PPIase family. In terms of tissue distribution, expressed only in flowers.

It is found in the membrane. The catalysed reaction is [protein]-peptidylproline (omega=180) = [protein]-peptidylproline (omega=0). PPIases accelerate the folding of proteins. It catalyzes the cis-trans isomerization of proline imidic peptide bonds in oligopeptides. This Arabidopsis thaliana (Mouse-ear cress) protein is Peptidyl-prolyl cis-trans isomerase CYP26-1 (CYP26-1).